A 138-amino-acid chain; its full sequence is Transcription antitermination protein NusB (138 aa).

This sequence belongs to the NusB family.

Functionally, involved in transcription antitermination. Required for transcription of ribosomal RNA (rRNA) genes. Binds specifically to the boxA antiterminator sequence of the ribosomal RNA (rrn) operons. This Colwellia psychrerythraea (strain 34H / ATCC BAA-681) (Vibrio psychroerythus) protein is Transcription antitermination protein NusB.